The following is a 287-amino-acid chain: Oxaloacetate decarboxylase (287 aa).

A substrate-binding site is contributed by Ser50. Mg(2+) is bound at residue Asp88. Arg159 and His235 together coordinate substrate.

It belongs to the isocitrate lyase/PEP mutase superfamily. Oxaloacetate decarboxylase family. As to quaternary structure, homotetramer; dimer of dimers. Mg(2+) serves as cofactor.

The enzyme catalyses oxaloacetate + H(+) = pyruvate + CO2. Its function is as follows. Catalyzes the decarboxylation of oxaloacetate into pyruvate. Seems to play a role in maintaining cellular concentrations of bicarbonate and pyruvate. The chain is Oxaloacetate decarboxylase from Chromohalobacter salexigens (strain ATCC BAA-138 / DSM 3043 / CIP 106854 / NCIMB 13768 / 1H11).